We begin with the raw amino-acid sequence, 369 residues long: Deoxyhypusine synthase (369 aa).

A Phosphoserine modification is found at S78. NAD(+) is bound by residues 105–109, 131–133, E137, and D238; these read SNLIS and TAG. 136–137 contacts spermidine; sequence EE. Residue D243 coordinates spermidine. G283 contacts NAD(+). Residue H288 participates in spermidine binding. Position 308-309 (308-309) interacts with NAD(+); that stretch reads TA. Residues 314-316 and 323-329 each bind spermidine; these read GSD and EAVSWGK. Catalysis depends on K329, which acts as the Nucleophile. Residue 342–343 coordinates NAD(+); sequence DA.

Belongs to the deoxyhypusine synthase family. As to quaternary structure, homotetramer formed by a dimer of dimers. Requires NAD(+) as cofactor.

It catalyses the reaction [eIF5A protein]-L-lysine + spermidine = [eIF5A protein]-deoxyhypusine + propane-1,3-diamine. It functions in the pathway protein modification; eIF5A hypusination. In terms of biological role, catalyzes the NAD-dependent oxidative cleavage of spermidine and the subsequent transfer of the butylamine moiety of spermidine to the epsilon-amino group of a critical lysine residue of the eIF-5A precursor protein to form the intermediate deoxyhypusine residue. This is the first step of the post-translational modification of that lysine into an unusual amino acid residue named hypusine. Hypusination is unique to mature eIF-5A factor and is essential for its function. The chain is Deoxyhypusine synthase (DHPS) from Homo sapiens (Human).